Reading from the N-terminus, the 90-residue chain is Antitoxin epsilon 2 (90 aa).

The protein belongs to the epsilon antitoxin family. As to quaternary structure, in the presence of the zeta toxin, forms an inactive PezA(2)PezT(2) heterotetramer.

Its function is as follows. Antitoxin component of a type II toxin-antitoxin (TA) system. Neutralizes the toxic effect of zeta toxin. Part of a postsegregational killing (PSK) system involved in the killing of plasmid-free cells. Continuous synthesis of the epsilon antitoxin is required to counteract the zeta toxin. The chain is Antitoxin epsilon 2 from Enterococcus faecalis (Streptococcus faecalis).